The sequence spans 201 residues: dTTP/UTP pyrophosphatase (201 aa).

Asp-81 functions as the Proton acceptor in the catalytic mechanism.

Belongs to the Maf family. YhdE subfamily. Requires a divalent metal cation as cofactor.

It is found in the cytoplasm. The catalysed reaction is dTTP + H2O = dTMP + diphosphate + H(+). It carries out the reaction UTP + H2O = UMP + diphosphate + H(+). Nucleoside triphosphate pyrophosphatase that hydrolyzes dTTP and UTP. May have a dual role in cell division arrest and in preventing the incorporation of modified nucleotides into cellular nucleic acids. This Dechloromonas aromatica (strain RCB) protein is dTTP/UTP pyrophosphatase.